A 237-amino-acid polypeptide reads, in one-letter code: MKIFLENLYHSDCYFLPIRDNQQVLVGVELITHFSSEDGTVRIPTSRVIAQLTEEQHWQLFSEQLELLKSCQHFFIQHKLFAWLNLTPQVATLLLERDNYAGELLKYPFIELLINENYPHLNEGKDNRGLLSLSQVYPLVLGNLGAGNSTMKAVFDGLFTRVMLDKSFIQQQITHRSFEPFIRAIQAQISPCCNCIIAGGIDTAEILAQITPFDFHALQGCLWPAVPINQITTLVQR.

The region spanning 1–237 (MKIFLENLYH…INQITTLVQR (237 aa)) is the EAL domain.

Belongs to the YdiV family.

Upon overexpression acts as a novel anti-FlhC(2)FlhD(4) factor, decreasing its DNA-binding activity, able to negatively regulate expression of flagellar class II operons including FliC. This Escherichia coli (strain K12) protein is Putative anti-FlhC(2)FlhD(4) factor YdiV (ydiV).